A 563-amino-acid chain; its full sequence is Arylsulfatase K (563 aa).

Positions methionine 1–proline 17 are cleaved as a signal peptide. Ca(2+) is bound by residues aspartate 40 and cysteine 80. The active-site Nucleophile is cysteine 80. Cysteine 80 is modified (3-oxoalanine (Cys)). An N-linked (GlcNAc...) asparagine glycan is attached at asparagine 108. A substrate-binding site is contributed by lysine 128. Asparagine 191 carries N-linked (GlcNAc...) asparagine glycosylation. A substrate-binding site is contributed by histidine 249. Asparagine 260 carries an N-linked (GlcNAc...) asparagine glycan. Ca(2+)-binding residues include aspartate 311 and histidine 312. 3 N-linked (GlcNAc...) asparagine glycosylation sites follow: asparagine 373, asparagine 411, and asparagine 496.

The protein belongs to the sulfatase family. It depends on Ca(2+) as a cofactor. The conversion to 3-oxoalanine (also known as C-formylglycine, FGly), of a serine or cysteine residue in prokaryotes and of a cysteine residue in eukaryotes, is critical for catalytic activity. Post-translationally, the 75-kDa precursor undergoes proteolytic processing to yield a 23 kDa form. In terms of processing, N-glycosylated with both high mannose and complex type sugars.

It localises to the secreted. The protein resides in the lysosome. It carries out the reaction an aryl sulfate + H2O = a phenol + sulfate + H(+). The enzyme catalyses Hydrolysis of the 2-sulfate groups of the 2-O-sulfo-D-glucuronate residues of chondroitin sulfate, heparin and heparitin sulfate.. Functionally, catalyzes the hydrolysis of pseudosubstrates such as p-nitrocatechol sulfate and p-nitrophenyl sulfate. Catalyzes the hydrolysis of the 2-sulfate groups of the 2-O-sulfo-D-glucuronate residues of chondroitin sulfate, heparin and heparitin sulfate. Acts selectively on 2-sulfoglucuronate and lacks activity against 2-sulfoiduronate. This Rattus norvegicus (Rat) protein is Arylsulfatase K (Arsk).